The following is a 390-amino-acid chain: Queuine tRNA-ribosyltransferase (390 aa).

The active-site Proton acceptor is the Asp92. Substrate-binding positions include 92–96, Asp146, Gln195, and Gly222; that span reads DSGGF. Residues 253–259 are RNA binding; that stretch reads GVGTPED. Asp272 serves as the catalytic Nucleophile. The tract at residues 277–281 is RNA binding; important for wobble base 34 recognition; sequence TRNAR. Zn(2+) contacts are provided by Cys310, Cys312, Cys315, and His354.

The protein belongs to the queuine tRNA-ribosyltransferase family. As to quaternary structure, homodimer. Within each dimer, one monomer is responsible for RNA recognition and catalysis, while the other monomer binds to the replacement base PreQ1. The cofactor is Zn(2+).

It carries out the reaction 7-aminomethyl-7-carbaguanine + guanosine(34) in tRNA = 7-aminomethyl-7-carbaguanosine(34) in tRNA + guanine. It participates in tRNA modification; tRNA-queuosine biosynthesis. Its function is as follows. Catalyzes the base-exchange of a guanine (G) residue with the queuine precursor 7-aminomethyl-7-deazaguanine (PreQ1) at position 34 (anticodon wobble position) in tRNAs with GU(N) anticodons (tRNA-Asp, -Asn, -His and -Tyr). Catalysis occurs through a double-displacement mechanism. The nucleophile active site attacks the C1' of nucleotide 34 to detach the guanine base from the RNA, forming a covalent enzyme-RNA intermediate. The proton acceptor active site deprotonates the incoming PreQ1, allowing a nucleophilic attack on the C1' of the ribose to form the product. After dissociation, two additional enzymatic reactions on the tRNA convert PreQ1 to queuine (Q), resulting in the hypermodified nucleoside queuosine (7-(((4,5-cis-dihydroxy-2-cyclopenten-1-yl)amino)methyl)-7-deazaguanosine). In Acidovorax sp. (strain JS42), this protein is Queuine tRNA-ribosyltransferase.